We begin with the raw amino-acid sequence, 337 residues long: Casein kinase I isoform alpha (337 aa).

Residue alanine 2 is modified to N-acetylalanine. A Phosphoserine modification is found at serine 4. N6-acetyllysine is present on lysine 8. In terms of domain architecture, Protein kinase spans 17–285 (YKLVRKIGSG…YLRQLFRILF (269 aa)). ATP contacts are provided by residues 23–31 (IGSGSFGDI) and lysine 46. The Proton acceptor role is filled by aspartate 136. Residues 309–325 (AASSSGQGQQAQTPTGK) show a composition bias toward low complexity. Residues 309–337 (AASSSGQGQQAQTPTGKQTDKTKSNMKGF) are disordered.

This sequence belongs to the protein kinase superfamily. CK1 Ser/Thr protein kinase family. Casein kinase I subfamily. Interacts with the Axin complex. Interacts with TUT1, leading to TUT1 phosphorylation. Interacts with FAM83A, FAM83B, FAM83C, FAM83D, FAM83E, FAM83F, FAM83G and FAM83H (via DUF1669). Interaction with FAM83H recruits CSNK1A1 to keratin filaments. Post-translationally, phosphorylated by MTOR in response to mitogenic stimulation, leading to its activation.

The protein resides in the cytoplasm. It is found in the cytoskeleton. It localises to the microtubule organizing center. The protein localises to the centrosome. Its subcellular location is the chromosome. The protein resides in the centromere. It is found in the kinetochore. It localises to the nucleus speckle. The protein localises to the cilium basal body. Its subcellular location is the spindle. It catalyses the reaction L-seryl-[protein] + ATP = O-phospho-L-seryl-[protein] + ADP + H(+). The catalysed reaction is L-threonyl-[protein] + ATP = O-phospho-L-threonyl-[protein] + ADP + H(+). In terms of biological role, casein kinases are operationally defined by their preferential utilization of acidic proteins such as caseins as substrates. Can phosphorylate a large number of proteins. Participates in Wnt signaling. Phosphorylates CTNNB1 at 'Ser-45'. May phosphorylate PER1 and PER2. May play a role in segregating chromosomes during mitosis. May play a role in keratin cytoskeleton disassembly and thereby, it may regulate epithelial cell migration. Acts as a positive regulator of mTORC1 and mTORC2 signaling in response to nutrients by mediating phosphorylation of DEPTOR inhibitor. Acts as an inhibitor of NLRP3 inflammasome assembly by mediating phosphorylation of NLRP3. The polypeptide is Casein kinase I isoform alpha (Csnk1a1) (Mus musculus (Mouse)).